Here is a 431-residue protein sequence, read N- to C-terminus: NADH-quinone oxidoreductase subunit D 2 (431 aa).

The segment at 1-37 is disordered; sequence MSEAKGVGGIDPRATPGSAGAGERPPMGTLSPRAGEG.

It belongs to the complex I 49 kDa subunit family. NDH-1 is composed of 14 different subunits. Subunits NuoB, C, D, E, F, and G constitute the peripheral sector of the complex.

It is found in the cell inner membrane. The catalysed reaction is a quinone + NADH + 5 H(+)(in) = a quinol + NAD(+) + 4 H(+)(out). Its function is as follows. NDH-1 shuttles electrons from NADH, via FMN and iron-sulfur (Fe-S) centers, to quinones in the respiratory chain. The immediate electron acceptor for the enzyme in this species is believed to be ubiquinone. Couples the redox reaction to proton translocation (for every two electrons transferred, four hydrogen ions are translocated across the cytoplasmic membrane), and thus conserves the redox energy in a proton gradient. The sequence is that of NADH-quinone oxidoreductase subunit D 2 from Anaeromyxobacter sp. (strain K).